The following is a 256-amino-acid chain: Trypsin, alkaline A (256 aa).

Positions 1–17 (MRLFLALLALGFAAVAA) are cleaved as a signal peptide. A propeptide spans 18–24 (VPAYPQR) (activation peptide). Residues 25 to 256 (IVGGSTTTIQ…RFANWIRNNS (232 aa)) form the Peptidase S1 domain. C55 and C71 form a disulfide bridge. Catalysis depends on charge relay system residues H70 and D115. 2 disulfides stabilise this stretch: C180–C197 and C209–C233. S213 functions as the Charge relay system in the catalytic mechanism.

This sequence belongs to the peptidase S1 family. Midgut.

Its subcellular location is the secreted. The protein localises to the extracellular space. The catalysed reaction is Preferential cleavage: Arg-|-Xaa, Lys-|-Xaa.. The polypeptide is Trypsin, alkaline A (Manduca sexta (Tobacco hawkmoth)).